We begin with the raw amino-acid sequence, 144 residues long: Deoxyuridine 5'-triphosphate nucleotidohydrolase (144 aa).

Residues 63 to 65 (RSG), asparagine 76, and 80 to 82 (TVD) each bind substrate.

It belongs to the dUTPase family. It depends on Mg(2+) as a cofactor.

It catalyses the reaction dUTP + H2O = dUMP + diphosphate + H(+). It functions in the pathway pyrimidine metabolism; dUMP biosynthesis; dUMP from dCTP (dUTP route): step 2/2. This enzyme is involved in nucleotide metabolism: it produces dUMP, the immediate precursor of thymidine nucleotides and it decreases the intracellular concentration of dUTP so that uracil cannot be incorporated into DNA. The protein is Deoxyuridine 5'-triphosphate nucleotidohydrolase of Flavobacterium johnsoniae (strain ATCC 17061 / DSM 2064 / JCM 8514 / BCRC 14874 / CCUG 350202 / NBRC 14942 / NCIMB 11054 / UW101) (Cytophaga johnsonae).